We begin with the raw amino-acid sequence, 106 residues long: PTS system N,N'-diacetylchitobiose-specific EIIB component (106 aa).

The PTS EIIB type-3 domain maps to 3 to 106 (KKHIYLFCSA…VAAIKKAAAN (104 aa)). The Phosphocysteine intermediate role is filled by Cys10. Phosphocysteine; by EIIA is present on Cys10.

As to quaternary structure, forms a complex with ChbA (EIIA). ChbB is a monomer in both its unphosphorylated and phosphorylated forms.

The protein localises to the cytoplasm. It carries out the reaction N,N'-diacetylchitobiose(out) + N(pros)-phospho-L-histidyl-[protein] = diacetylchitobiose-6'-phosphate(in) + L-histidyl-[protein]. Functionally, the phosphoenolpyruvate-dependent sugar phosphotransferase system (sugar PTS), a major carbohydrate active transport system, catalyzes the phosphorylation of incoming sugar substrates concomitantly with their translocation across the cell membrane. The enzyme II ChbABC PTS system is involved in the transport of the chitin disaccharide N,N'-diacetylchitobiose (GlcNAc2). This chain is PTS system N,N'-diacetylchitobiose-specific EIIB component (chbB), found in Escherichia coli O157:H7.